Reading from the N-terminus, the 142-residue chain is Protein Turandot X (142 aa).

Residues 1 to 22 (MGLSIGSLLICVFLGIVPFATA) form the signal peptide.

It belongs to the Turandot family.

The protein resides in the secreted. Functionally, a humoral factor that may play a role in stress tolerance. This is Protein Turandot X from Drosophila melanogaster (Fruit fly).